We begin with the raw amino-acid sequence, 543 residues long: Glucose-6-phosphate isomerase (543 aa).

The active-site Proton donor is the Glu353. Active-site residues include His384 and Lys504.

Belongs to the GPI family.

The protein resides in the cytoplasm. The catalysed reaction is alpha-D-glucose 6-phosphate = beta-D-fructose 6-phosphate. It participates in carbohydrate biosynthesis; gluconeogenesis. It functions in the pathway carbohydrate degradation; glycolysis; D-glyceraldehyde 3-phosphate and glycerone phosphate from D-glucose: step 2/4. In terms of biological role, catalyzes the reversible isomerization of glucose-6-phosphate to fructose-6-phosphate. This chain is Glucose-6-phosphate isomerase, found in Roseiflexus castenholzii (strain DSM 13941 / HLO8).